The following is a 332-amino-acid chain: uncharacterized protein (332 aa).

This is an uncharacterized protein from Schizosaccharomyces pombe (strain 972 / ATCC 24843) (Fission yeast).